We begin with the raw amino-acid sequence, 215 residues long: LexA repressor (215 aa).

Positions 29 to 49 (VREICSAVGFKSTSTVHSYLQ) form a DNA-binding region, H-T-H motif. Catalysis depends on for autocatalytic cleavage activity residues Ser-138 and Lys-175.

This sequence belongs to the peptidase S24 family. Homodimer.

It catalyses the reaction Hydrolysis of Ala-|-Gly bond in repressor LexA.. In terms of biological role, represses a number of genes involved in the response to DNA damage (SOS response), including recA and lexA. In the presence of single-stranded DNA, RecA interacts with LexA causing an autocatalytic cleavage which disrupts the DNA-binding part of LexA, leading to derepression of the SOS regulon and eventually DNA repair. The protein is LexA repressor of Ruminiclostridium cellulolyticum (strain ATCC 35319 / DSM 5812 / JCM 6584 / H10) (Clostridium cellulolyticum).